Reading from the N-terminus, the 487-residue chain is MTELFIDGAWIAGSGPAFASRNPGTDAIAWQGDSASAADVDRAVASARRAFAGWSALDFEARCAIVKRFAALLTERKEAIATAIGRETGKPLWEARTEVAAMAAKVGISIQAYQERTGEKRQDMADGVAVLRHRPHGVVAVFGPYNFPGHLPNGHIVPALIAGNTVVFKPSELAPGVARATVEVWQEAGLPAGVLNLVQGEKDTGIALANHRQIDGLFFTGSSDTGTLLHKQFGGRPEIVLALEMGGNNPLVIGEVEDLDAAVHHTIQSAFLSAGQRCTCARRIFVPQGAFGERFLARFADVTSKIMADVFDADPQPFMGAVISARAAAKLVDAQSRLVEQGAKPIIEMTQRDPRLGFVNASIIDVTGVANLPDEEHFGPLAQIVRYATFDEAIERANDTAFGLSAGLLADDAHAWEHFRRTIRAGIVNWNRPTNGASSAAPFGGTGRSGNHRPSAYYAADYCAYPMASVESTQLTLPASLSPGLHF.

221-226 (GSSDTG) serves as a coordination point for NAD(+). Residues Glu244 and Cys278 contribute to the active site.

Belongs to the aldehyde dehydrogenase family. AstD subfamily.

The catalysed reaction is N-succinyl-L-glutamate 5-semialdehyde + NAD(+) + H2O = N-succinyl-L-glutamate + NADH + 2 H(+). Its pathway is amino-acid degradation; L-arginine degradation via AST pathway; L-glutamate and succinate from L-arginine: step 4/5. In terms of biological role, catalyzes the NAD-dependent reduction of succinylglutamate semialdehyde into succinylglutamate. The sequence is that of N-succinylglutamate 5-semialdehyde dehydrogenase from Burkholderia ambifaria (strain MC40-6).